We begin with the raw amino-acid sequence, 377 residues long: Nitric oxide reductase FlRd-NAD(+) reductase (377 aa).

The protein belongs to the FAD-dependent oxidoreductase family. It depends on FAD as a cofactor.

The protein resides in the cytoplasm. The catalysed reaction is 2 reduced [nitric oxide reductase rubredoxin domain] + NAD(+) + H(+) = 2 oxidized [nitric oxide reductase rubredoxin domain] + NADH. The protein operates within nitrogen metabolism; nitric oxide reduction. Functionally, one of at least two accessory proteins for anaerobic nitric oxide (NO) reductase. Reduces the rubredoxin moiety of NO reductase. The polypeptide is Nitric oxide reductase FlRd-NAD(+) reductase (Escherichia coli O7:K1 (strain IAI39 / ExPEC)).